Consider the following 1822-residue polypeptide: Sperm flagellar protein 2 (1822 aa).

The 105-residue stretch at 1–105 folds into the Calponin-homology (CH) domain; the sequence is MSEILCQWLN…LLYQLYIALQ (105 aa). Coiled coils occupy residues 227-260, 321-396, 732-758, and 871-909; these read KALE…KDLQ, AHEA…KQAK, NQAQ…KAQK, and CEKV…LAEL. Disordered stretches follow at residues 896–1004, 1278–1327, 1664–1718, and 1803–1822; these read KEAE…VPQP, EEEK…EATP, SIPS…NNEK, and EHVQ…EEKK. Pro residues predominate over residues 911-920; that stretch reads LPTPPPAPPP. Basic and acidic residues-rich tracts occupy residues 921-930 and 949-968; these read EPEKEKEIHQ and PHGK…ETAL. Residues 975–987 show a composition bias toward low complexity; the sequence is KGKSSGGKVPVKK. 2 stretches are compositionally biased toward basic and acidic residues: residues 1278 to 1292 and 1303 to 1314; these read EEEK…KEKS and KEPPKKKQEDKK. An interaction with IFT20 region spans residues 1324–1676; that stretch reads EATPVIVTTE…SAEKTSSTDA (353 aa). Residues 1686–1712 adopt a coiled-coil conformation; it reads EENAAREERKLKDDTEKREQKDEEIPE. Basic and acidic residues predominate over residues 1688–1708; it reads NAAREERKLKDDTEKREQKDE.

Interacts (via C-terminus) with IFT20. Interacts with DYNC1I2.

The protein localises to the cell projection. It localises to the cilium. Its subcellular location is the flagellum. The protein resides in the cytoplasm. It is found in the golgi apparatus. Functionally, required for correct axoneme development in spermatozoa. Important for normal development of the manchette and sperm head morphology. Essential for male fertility. Plays a role in localization of the intraflagellar transport protein IFT20 to the manchette, suggesting function as an adapter for dynein-mediated protein transport during spermatogenesis. Also plays a role in bone growth where it seems to be required for normal osteoblast differentiation. The protein is Sperm flagellar protein 2 (SPEF2) of Homo sapiens (Human).